Consider the following 198-residue polypeptide: Pyridoxal 5'-phosphate synthase subunit PdxT (198 aa).

50–52 (GES) contributes to the L-glutamine binding site. C82 serves as the catalytic Nucleophile. Residues R114 and 143-144 (IR) each bind L-glutamine. Catalysis depends on charge relay system residues H179 and E181.

It belongs to the glutaminase PdxT/SNO family. In terms of assembly, in the presence of PdxS, forms a dodecamer of heterodimers. Only shows activity in the heterodimer.

It catalyses the reaction aldehydo-D-ribose 5-phosphate + D-glyceraldehyde 3-phosphate + L-glutamine = pyridoxal 5'-phosphate + L-glutamate + phosphate + 3 H2O + H(+). The enzyme catalyses L-glutamine + H2O = L-glutamate + NH4(+). It functions in the pathway cofactor biosynthesis; pyridoxal 5'-phosphate biosynthesis. In terms of biological role, catalyzes the hydrolysis of glutamine to glutamate and ammonia as part of the biosynthesis of pyridoxal 5'-phosphate. The resulting ammonia molecule is channeled to the active site of PdxS. The polypeptide is Pyridoxal 5'-phosphate synthase subunit PdxT (Metallosphaera sedula (strain ATCC 51363 / DSM 5348 / JCM 9185 / NBRC 15509 / TH2)).